The chain runs to 351 residues: Anthranilate phosphoribosyltransferase (351 aa).

Residues glycine 80, 83-84 (GD), threonine 88, 90-93 (NVST), 108-116 (KHGNRSVTS), and serine 120 contribute to the 5-phospho-alpha-D-ribose 1-diphosphate site. Glycine 80 lines the anthranilate pocket. Serine 92 contributes to the Mg(2+) binding site. Anthranilate is bound at residue asparagine 111. Arginine 166 is a binding site for anthranilate. Residues aspartate 229 and glutamate 230 each coordinate Mg(2+).

This sequence belongs to the anthranilate phosphoribosyltransferase family. Homodimer. Requires Mg(2+) as cofactor.

It catalyses the reaction N-(5-phospho-beta-D-ribosyl)anthranilate + diphosphate = 5-phospho-alpha-D-ribose 1-diphosphate + anthranilate. Its pathway is amino-acid biosynthesis; L-tryptophan biosynthesis; L-tryptophan from chorismate: step 2/5. Catalyzes the transfer of the phosphoribosyl group of 5-phosphorylribose-1-pyrophosphate (PRPP) to anthranilate to yield N-(5'-phosphoribosyl)-anthranilate (PRA). The chain is Anthranilate phosphoribosyltransferase from Prosthecochloris aestuarii (strain DSM 271 / SK 413).